A 299-amino-acid chain; its full sequence is Lathosterol oxidase (299 aa).

A run of 3 helical transmembrane segments spans residues Ile-32–Leu-52, Phe-79–Leu-99, and Ile-117–Ile-137. The Fatty acid hydroxylase domain occupies Val-124 to Gly-252. A Histidine box-1 motif is present at residues His-138 to His-143. A Histidine box-2 motif is present at residues His-151–His-155. The helical transmembrane segment at Val-186 to Ile-206 threads the bilayer. The Histidine box-3 signature appears at His-228–His-233. At Ser-253 the chain carries Phosphoserine. Residues Phe-280–Lys-299 are disordered.

Belongs to the sterol desaturase family. Fe cation serves as cofactor.

The protein resides in the endoplasmic reticulum membrane. The catalysed reaction is a Delta(7)-sterol + 2 Fe(II)-[cytochrome b5] + O2 + 2 H(+) = a Delta(5),Delta(7)-sterol + 2 Fe(III)-[cytochrome b5] + 2 H2O. It carries out the reaction lathosterol + 2 Fe(II)-[cytochrome b5] + O2 + 2 H(+) = 7-dehydrocholesterol + 2 Fe(III)-[cytochrome b5] + 2 H2O. The enzyme catalyses 5alpha-cholesta-7,24-dien-3beta-ol + 2 Fe(II)-[cytochrome b5] + O2 + 2 H(+) = 7-dehydrodesmosterol + 2 Fe(III)-[cytochrome b5] + 2 H2O. The protein operates within steroid biosynthesis; cholesterol biosynthesis. Functionally, catalyzes the penultimate step of the biosynthesis of cholesterol, the dehydrogenation of lathosterol into 7-dehydrocholesterol (7-DHC). Cholesterol is the major sterol component in mammalian membranes and a precursor for bile acid and steroid hormone synthesis. In addition to its essential role in cholesterol biosynthesis, it also indirectly regulates ferroptosis through the production of 7-DHC. By diverting the spread of damage caused by peroxyl radicals from the phospholipid components to its sterol nucleus, 7-DHC prevents this form of cell death. The polypeptide is Lathosterol oxidase (Mus musculus (Mouse)).